The following is a 506-amino-acid chain: Histidine--tRNA ligase, mitochondrial (506 aa).

A mitochondrion-targeting transit peptide spans 1-33 (MPLLGLLPRRAWASLLSQLLRPPCASCTGAVRC). The residue at position 67 (serine 67) is a Phosphoserine. L-histidine is bound by residues 131-133 (DLT), arginine 158, glutamine 174, aspartate 178, arginine 327, and 331-332 (YY). An N6-acetyllysine modification is found at lysine 444.

It belongs to the class-II aminoacyl-tRNA synthetase family. As to quaternary structure, homodimer. In terms of tissue distribution, a high level expression is seen in the heart, kidney and skeletal muscle while a lower level expression is seen in the brain and liver.

The protein resides in the mitochondrion. The enzyme catalyses tRNA(His) + L-histidine + ATP = L-histidyl-tRNA(His) + AMP + diphosphate + H(+). In terms of biological role, mitochondrial aminoacyl-tRNA synthetase that catalyzes the ATP-dependent ligation of histidine to the 3'-end of its cognate tRNA, via the formation of an aminoacyl-adenylate intermediate (His-AMP). This Homo sapiens (Human) protein is Histidine--tRNA ligase, mitochondrial (HARS2).